The primary structure comprises 1036 residues: Isoleucine--tRNA ligase (1036 aa).

Residues 46–56 (PFATGLPHYGH) carry the 'HIGH' region motif. The short motif at 589-593 (KMSKR) is the 'KMSKS' region element. Residue Lys-592 participates in ATP binding.

The protein belongs to the class-I aminoacyl-tRNA synthetase family. IleS type 2 subfamily. In terms of assembly, monomer. The cofactor is Zn(2+).

Its subcellular location is the cytoplasm. The catalysed reaction is tRNA(Ile) + L-isoleucine + ATP = L-isoleucyl-tRNA(Ile) + AMP + diphosphate. Its function is as follows. Catalyzes the attachment of isoleucine to tRNA(Ile). As IleRS can inadvertently accommodate and process structurally similar amino acids such as valine, to avoid such errors it has two additional distinct tRNA(Ile)-dependent editing activities. One activity is designated as 'pretransfer' editing and involves the hydrolysis of activated Val-AMP. The other activity is designated 'posttransfer' editing and involves deacylation of mischarged Val-tRNA(Ile). This chain is Isoleucine--tRNA ligase, found in Chlamydia muridarum (strain MoPn / Nigg).